Reading from the N-terminus, the 426-residue chain is Glutamate-1-semialdehyde 2,1-aminomutase (426 aa).

Lys266 is modified (N6-(pyridoxal phosphate)lysine).

It belongs to the class-III pyridoxal-phosphate-dependent aminotransferase family. HemL subfamily. The cofactor is pyridoxal 5'-phosphate.

It is found in the cytoplasm. The enzyme catalyses (S)-4-amino-5-oxopentanoate = 5-aminolevulinate. It participates in porphyrin-containing compound metabolism; protoporphyrin-IX biosynthesis; 5-aminolevulinate from L-glutamyl-tRNA(Glu): step 2/2. The protein is Glutamate-1-semialdehyde 2,1-aminomutase (hemL) of Methanocaldococcus jannaschii (strain ATCC 43067 / DSM 2661 / JAL-1 / JCM 10045 / NBRC 100440) (Methanococcus jannaschii).